The sequence spans 790 residues: Lon protease (790 aa).

Residues 23 to 220 enclose the Lon N-terminal domain; the sequence is LPIMPIFHTV…EITLIVNHQL (198 aa). 372-379 serves as a coordination point for ATP; it reads GPPGTGKT. The 182-residue stretch at 608–789 folds into the Lon proteolytic domain; that stretch reads ISKPGIAMGL…REVLNIALSR (182 aa). Residues serine 695 and lysine 738 contribute to the active site.

Belongs to the peptidase S16 family. Homohexamer. Organized in a ring with a central cavity.

It is found in the cytoplasm. The catalysed reaction is Hydrolysis of proteins in presence of ATP.. Functionally, ATP-dependent serine protease that mediates the selective degradation of mutant and abnormal proteins as well as certain short-lived regulatory proteins. Required for cellular homeostasis and for survival from DNA damage and developmental changes induced by stress. Degrades polypeptides processively to yield small peptide fragments that are 5 to 10 amino acids long. Binds to DNA in a double-stranded, site-specific manner. In Syntrophus aciditrophicus (strain SB), this protein is Lon protease.